A 183-amino-acid polypeptide reads, in one-letter code: Adenine phosphoribosyltransferase (183 aa).

This sequence belongs to the purine/pyrimidine phosphoribosyltransferase family. In terms of assembly, homodimer.

It is found in the cytoplasm. It catalyses the reaction AMP + diphosphate = 5-phospho-alpha-D-ribose 1-diphosphate + adenine. Its pathway is purine metabolism; AMP biosynthesis via salvage pathway; AMP from adenine: step 1/1. In terms of biological role, catalyzes a salvage reaction resulting in the formation of AMP, that is energically less costly than de novo synthesis. In Shewanella sp. (strain MR-7), this protein is Adenine phosphoribosyltransferase.